Reading from the N-terminus, the 280-residue chain is Adenosylcobinamide-GDP ribazoletransferase (280 aa).

A run of 6 helical transmembrane segments spans residues 4–24, 39–59, 61–81, 108–128, 196–216, and 255–275; these read YLLAFKSGFGFLSTIPVGISM, VVGAVLGLLIGAVAFIGQVIF, GPVLAALLMGFIYYITGFNHL, TIGTGGVSFCILLLLTLYGSI, FLIGFVFGAIVCFLPFGWIGL, and TALIILAVLLQLSLNGYMGGF.

Belongs to the CobS family. Requires Mg(2+) as cofactor.

The protein localises to the cell membrane. The catalysed reaction is alpha-ribazole + adenosylcob(III)inamide-GDP = adenosylcob(III)alamin + GMP + H(+). It carries out the reaction alpha-ribazole 5'-phosphate + adenosylcob(III)inamide-GDP = adenosylcob(III)alamin 5'-phosphate + GMP + H(+). The protein operates within cofactor biosynthesis; adenosylcobalamin biosynthesis; adenosylcobalamin from cob(II)yrinate a,c-diamide: step 7/7. Functionally, joins adenosylcobinamide-GDP and alpha-ribazole to generate adenosylcobalamin (Ado-cobalamin). Also synthesizes adenosylcobalamin 5'-phosphate from adenosylcobinamide-GDP and alpha-ribazole 5'-phosphate. The chain is Adenosylcobinamide-GDP ribazoletransferase from Methanosarcina barkeri (strain Fusaro / DSM 804).